A 1180-amino-acid chain; its full sequence is uncharacterized protein (1180 aa).

Disordered stretches follow at residues 229–280 (RQQG…DTSI), 431–465 (KQPPKEKAHRRGAPHPESEPESSEESTPVWRPPLK), 484–575 (SRDT…PNMR), 730–758 (GRPLRETHHNDQDPEPRSMTLDSPRASRT), 810–986 (GKAE…ASWD), 1045–1109 (RLQE…ELEM), and 1125–1152 (ERLEYQRRKQEAEEKARLEAEERRQKEE). Residues 269–279 (QEDETQAEDTS) show a composition bias toward acidic residues. Basic residues predominate over residues 431 to 443 (KQPPKEKAHRRGA). Positions 486–497 (DTLSPQGSSSLP) are enriched in polar residues. The span at 509-518 (SKARHTRVHS) shows a compositional bias: basic residues. Basic and acidic residues-rich tracts occupy residues 730-745 (GRPLRETHHNDQDPEP), 826-837 (SHERDLINEAKR), and 846-856 (TKGPKSEREGK). A compositionally biased stretch (basic residues) spans 872-889 (KAKKKLEKKTRPQRKRTQ). Over residues 937–959 (QESQVSLDGRSSPSQIATVTGNM) the composition is skewed to polar residues. Basic and acidic residues-rich tracts occupy residues 960–986 (ESKEERRCEDPSKALLTKREQEKASWD), 1045–1106 (RLQE…RQEE), and 1127–1152 (LEYQRRKQEAEEKARLEAEERRQKEE). Residues 988 to 1171 (LRAERAEMRW…ATKQAQEQAR (184 aa)) are a coiled coil.

This is an uncharacterized protein from Homo sapiens (Human).